Here is a 120-residue protein sequence, read N- to C-terminus: MKEFIINRLKKFTIEDLMRCILGLQEIEIRVYFDLLENGEGSVLEIAERVNRDRTTVQKALRSLMNCGLVDRRKVTEKVGYKYIYNAVDLDRVSDIIEELLDDWYQNVKKWLTYFRENRK.

To M.jannaschii MJ1503.

This is an uncharacterized protein from Methanocaldococcus jannaschii (strain ATCC 43067 / DSM 2661 / JAL-1 / JCM 10045 / NBRC 100440) (Methanococcus jannaschii).